Reading from the N-terminus, the 414-residue chain is GPI mannosyltransferase 1 (414 aa).

Transmembrane regions (helical) follow at residues 6-26, 87-107, 119-139, 149-171, 183-203, 213-233, 282-302, 316-336, 356-376, and 387-407; these read ISHI…FGLY, YIFM…LSGI, IIML…STRG, IMLS…WLGL, LPSI…VPIV, FLIT…SIYG, MEKF…PLLF, FAFV…FLIF, IVAL…AYQL, and GLLF…SVFI.

It belongs to the PIGM family.

It is found in the endoplasmic reticulum membrane. It functions in the pathway glycolipid biosynthesis; glycosylphosphatidylinositol-anchor biosynthesis. In terms of biological role, mannosyltransferase involved in glycosylphosphatidylinositol-anchor biosynthesis. Transfers the first alpha-1,4-mannose to GlcN-acyl-PI during GPI precursor assembly. Required for cell wall integrity. The protein is GPI mannosyltransferase 1 (GPI14) of Debaryomyces hansenii (strain ATCC 36239 / CBS 767 / BCRC 21394 / JCM 1990 / NBRC 0083 / IGC 2968) (Yeast).